A 1798-amino-acid chain; its full sequence is Focadhesin (1798 aa).

An N6-acetyllysine modification is found at K816.

In terms of assembly, interacts with VCL. Expressed by glial and neuronal cells in brain.

The protein localises to the cell junction. The protein resides in the focal adhesion. Its subcellular location is the cytoplasm. It localises to the cytosol. Required for the maintenance of SKIC2 and SKIC3 proteostatic levels in the liver. May be involved in the regulation of RNA degradation by the exosome complex. Potential tumor suppressor in gliomas. This chain is Focadhesin (Focad), found in Mus musculus (Mouse).